A 431-amino-acid polypeptide reads, in one-letter code: Trigger factor (431 aa).

The PPIase FKBP-type domain maps to 158–243 (GHLVALETWS…VIEVSEPVLL (86 aa)).

The protein belongs to the FKBP-type PPIase family. Tig subfamily.

The protein localises to the cytoplasm. It carries out the reaction [protein]-peptidylproline (omega=180) = [protein]-peptidylproline (omega=0). Involved in protein export. Acts as a chaperone by maintaining the newly synthesized protein in an open conformation. Functions as a peptidyl-prolyl cis-trans isomerase. This chain is Trigger factor (tig), found in Xylella fastidiosa (strain 9a5c).